The chain runs to 316 residues: Phospholipase A1 4 (316 aa).

The signal sequence occupies residues 1–4 (ADDL). A propeptide spanning residues 5–14 (TTLRNGTLDR) is cleaved from the precursor. Cysteine 20 and cysteine 103 are oxidised to a cystine. Residue serine 153 is the Nucleophile of the active site. Catalysis depends on aspartate 181, which acts as the Charge relay system. 2 cysteine pairs are disulfide-bonded: cysteine 192–cysteine 197 and cysteine 235–cysteine 240. The active-site Charge relay system is histidine 242. Disulfide bonds link cysteine 257–cysteine 284, cysteine 258–cysteine 309, and cysteine 277–cysteine 282.

This sequence belongs to the AB hydrolase superfamily. Lipase family. As to expression, expressed by the venom gland.

It is found in the secreted. The catalysed reaction is a 1,2-diacyl-sn-glycero-3-phosphocholine + H2O = a 2-acyl-sn-glycero-3-phosphocholine + a fatty acid + H(+). Functionally, catalyzes the hydrolysis of phosphatidylcholine with phospholipase A1 activity. May act as an allergen and induce hemolytic activity. The sequence is that of Phospholipase A1 4 from Polistes dominula (European paper wasp).